We begin with the raw amino-acid sequence, 606 residues long: Homeobox protein B-H1 (606 aa).

Over residues 1–14 (MKDSMSILTQTPSE) the composition is skewed to polar residues. Disordered stretches follow at residues 1-65 (MKDS…PAVA), 104-188 (YKQQ…HPHA), 261-340 (APAG…AFTD), and 508-606 (AAAN…QIQV). Residues 21 to 40 (QLHHHLSHHHHPALHHHPVL) show a composition bias toward basic residues. Over residues 41–65 (QHHYSLQQQHQQQQQQQPPAPPAVA) the composition is skewed to low complexity. Over residues 108–118 (QQHHHHHHQSH) the composition is skewed to basic residues. The segment covering 119–138 (HNNNNHSGGSSGGTSPTHHN) has biased composition (low complexity). The segment covering 166-188 (HHLHPQSHPHPHPHPHSHPHPHA) has biased composition (basic residues). A compositionally biased stretch (acidic residues) spans 266-284 (ELDDSSDYHEENEDCDSDE). Over residues 286 to 295 (GSAGGGGGGS) the composition is skewed to gly residues. Residues 297 to 314 (HMDDHSVCSNGGKDDDGN) are compositionally biased toward basic and acidic residues. The span at 315–325 (SIKSGSTSDMS) shows a compositional bias: polar residues. Positions 331-390 (QRKARTAFTDHQLQTLEKSFERQKYLSVQERQELAHKLDLSDCQVKTWYQNRRTKWMRQT) form a DNA-binding region, homeobox. Over residues 513 to 522 (GGPPPPPPPS) the composition is skewed to pro residues. The segment covering 523–534 (SAAAATGGSPSP) has biased composition (low complexity). Over residues 561 to 576 (ASPPLPLPLARPPSTP) the composition is skewed to pro residues.

The protein belongs to the Antp homeobox family. In terms of tissue distribution, abundant in the eye-antenna imaginal disk.

The protein localises to the nucleus. Functionally required in R1 and R6 receptor cells and primary pigment cells for normal eye development. This Drosophila ananassae (Fruit fly) protein is Homeobox protein B-H1 (B-H1).